A 110-amino-acid chain; its full sequence is UPF0060 membrane protein Veis_0342 (110 aa).

4 helical membrane passes run 8–28 (VLFT…WLVI), 33–53 (PLWL…LLTL), 63–83 (AAYG…VDGV), and 90–110 (VAGA…PASA).

The protein belongs to the UPF0060 family.

It localises to the cell inner membrane. In Verminephrobacter eiseniae (strain EF01-2), this protein is UPF0060 membrane protein Veis_0342.